A 261-amino-acid polypeptide reads, in one-letter code: Carnitinyl-CoA dehydratase (261 aa).

Glutamate 111 acts as the Nucleophile in catalysis. The active-site Proton acceptor is the glutamate 131.

It belongs to the enoyl-CoA hydratase/isomerase family.

It catalyses the reaction (R)-carnitinyl-CoA = crotonobetainyl-CoA + H2O. It functions in the pathway amine and polyamine metabolism; carnitine metabolism. Functionally, catalyzes the reversible dehydration of L-carnitinyl-CoA to crotonobetainyl-CoA. This is Carnitinyl-CoA dehydratase from Escherichia coli O157:H7.